The following is a 563-amino-acid chain: Pre-hexon-linking protein IIIa (563 aa).

A peripentonal hexon-tethering domain region spans residues 1–117; it reads MRKRRTLTAP…ALLHRVSKYN (117 aa). The interval 148 to 261 is binding to hexon-linking protein; sequence GSLTALNSFL…FTDSVSISRD (114 aa). S235 carries the post-translational modification Phosphoserine; by host. Residue T284 is modified to Phosphothreonine; by host. Residues 449 to 472 are disordered; that stretch reads RTESRSVSRVPTPASSRRSSVAMA. Phosphoserine; by host is present on residues S452 and S456. Residues 462 to 472 show a composition bias toward low complexity; it reads ASSRRSSVAMA. 2 positions are modified to phosphoserine; by host: S475 and S486. A disordered region spans residues 522–543; the sequence is KYSSAISSDESDDGMSKPDKFL. Positions 549-563 are excised as a propeptide; it reads GNPFAHLRPKLGRCL.

The protein belongs to the adenoviridae hexon-linking protein IIIa family. In terms of assembly, interacts with hexon proteins; this interaction tethers the peripentonal hexons to hexons situated in the facet. Interacts with the penton protein (via N-terminus). Interacts with packaging protein 3; this interaction is required to promote correct genome packaging. Cleaved near the C-terminus by the viral protease during virion maturation to form the mature protein.

It localises to the virion. It is found in the host nucleus. Its function is as follows. Structural component of the virion that acts as a cement protein on the capsid exterior which mediates the interactions between the hexons, including the peripentonal hexons, and reaches all the way to the penton vertices. Two hexon linking proteins IIIa, one from each facet, stabilize the unique edge interface between a pair of facets. As the virus enters the host cell, hexon linking proteins IIIa are shed concomitant with virion acidification in the endosome. During virus assembly, seems to play a role in the serotype specificity of the packaging of viral DNA via its interaction with packaging protein 3. The polypeptide is Pre-hexon-linking protein IIIa (Canis lupus familiaris (Dog)).